The sequence spans 327 residues: Probable cell division protein WhiA (327 aa).

A DNA-binding region (H-T-H motif) is located at residues 275-308 (SLEELGRLADPPMTKDAVAGRIRRLLSMADRKAK). Residues 304-327 (DRKAKQDGIPDTESAVTPDLLEDA) form a disordered region.

Belongs to the WhiA family.

Involved in cell division and chromosome segregation. The protein is Probable cell division protein WhiA of Mycolicibacterium gilvum (strain PYR-GCK) (Mycobacterium gilvum (strain PYR-GCK)).